Here is a 706-residue protein sequence, read N- to C-terminus: MFEKPVVKSFQYGNHTVTLETGVMARQATAAVMATMDDTSVFVSVVAKKEAVAGQDFFPLTVNYQERTYAAGKIPGGFFKREGRPSEGETLTARLIDRPIRPLFPSAFKNEVQVIATVVSINPDVNPDMITMIATSAALAISGAPFNGPIGAARVGHIDGELVLNPSNTELENSKLDLVVSGTEGAVLMVESEADNLSEEEMLSAVVYGHDQQQVVIKAINEFAAEVATPSWNWEAPAVNTELKAQVAELAETRLSDAYQITEKMARYEQVGAIKNDTVEALIAQDENLDEREIRGMLGSLEKNVVRSRIIAGNPRIDGREKDMVRALDVRTGVLPRTHGSSLFTRGETQALVTATLGTQRDAQIIDSLMGEKKDNFLLHYNFPPYCVGETGFVGSPKRREIGHGKLAKRGIQAVMPSVDEFPYTVRVVSEITESNGSSSMASVCGTSLALMDAGVPIKASVAGIAMGLVKEGDDFVVLSDILGDEDHLGDMDFKVAGTNAGITALQMDIKIEGITKEIMQIALNQAQGARKHILSVMDEAISGAREDISEFAPRIHTMKISSDKIKDVIGKGGAVIRALCEETGTTIEIEDDGTIKIAATEGAAAKEAIRRIEEITAEVEVGRIYQGKVARLADFGAFVTILPGKDGLVHISQIADKRVEKVSDYLTEGQEVPVKVLEIDRQGRVRLSMKEAVETPAEGEAPAAE.

Mg(2+)-binding residues include aspartate 487 and aspartate 493. Residues 554–613 enclose the KH domain; it reads PRIHTMKISSDKIKDVIGKGGAVIRALCEETGTTIEIEDDGTIKIAATEGAAAKEAIRRI. The S1 motif domain occupies 623 to 691; that stretch reads GRIYQGKVAR…RQGRVRLSMK (69 aa).

It belongs to the polyribonucleotide nucleotidyltransferase family. In terms of assembly, component of the RNA degradosome, which is a multiprotein complex involved in RNA processing and mRNA degradation. Mg(2+) is required as a cofactor.

It is found in the cytoplasm. It catalyses the reaction RNA(n+1) + phosphate = RNA(n) + a ribonucleoside 5'-diphosphate. Its function is as follows. Involved in mRNA degradation. Catalyzes the phosphorolysis of single-stranded polyribonucleotides processively in the 3'- to 5'-direction. The chain is Polyribonucleotide nucleotidyltransferase from Vibrio atlanticus (strain LGP32) (Vibrio splendidus (strain Mel32)).